Reading from the N-terminus, the 145-residue chain is Selenoprotein M (145 aa).

Residues 1–23 (MSLLLPPLALLLLLAALVAPATA) form the signal peptide. Residues Cys-45 and Sec-48 each act as nucleophile in the active site. The segment at residues 45 to 48 (CGGU) is a cross-link (cysteinyl-selenocysteine (Cys-Sec)). Position 48 (Sec-48) is a non-standard amino acid, selenocysteine.

It belongs to the selenoprotein M/F family. Widely expressed.

Its subcellular location is the cytoplasm. It is found in the perinuclear region. The protein localises to the endoplasmic reticulum. The protein resides in the golgi apparatus. May function as a thiol-disulfide oxidoreductase that participates in disulfide bond formation. This is Selenoprotein M from Homo sapiens (Human).